Consider the following 56-residue polypeptide: MAVQQNKPSRSKRGMRRAHDALKTSTISVDKTSGKTHLRHHITTDGFYRGYKILKK.

A disordered region spans residues 1 to 34 (MAVQQNKPSRSKRGMRRAHDALKTSTISVDKTSG).

Belongs to the bacterial ribosomal protein bL32 family.

This is Large ribosomal subunit protein bL32 from Baumannia cicadellinicola subsp. Homalodisca coagulata.